Consider the following 33-residue polypeptide: DELTA-pseudomyrmecitoxin-Pp1a subunit B (33 aa).

In terms of assembly, heterodimer composed of subunit A and subunit B (DELTA-PSDTX-Pp1a); disulfide-linked. In terms of tissue distribution, expressed by the venom gland.

It is found in the secreted. Functionally, this heterodimer has insecticidal and cytotoxic properties. Induces immediate paralysis when injected into blowflies (Lucilia cuprina), and then death within 24 hours. Also inhibits the growth of Aedes albopictus mosquito C6/36 cells. In Pseudomyrmex penetrator (Ant), this protein is DELTA-pseudomyrmecitoxin-Pp1a subunit B.